A 67-amino-acid chain; its full sequence is MNVTVMFLVLLLLTMPLTDGFNIRATNGGELFGPVQRDAGNVLDHGFQRRRDCPPWCPTSHCNAGTC.

The N-terminal stretch at 1-20 (MNVTVMFLVLLLLTMPLTDG) is a signal peptide. Residues 21 to 48 (FNIRATNGGELFGPVQRDAGNVLDHGFQ) constitute a propeptide that is removed on maturation.

Belongs to the conotoxin L superfamily. In terms of processing, contains 2 disulfide bonds. As to expression, expressed by the venom duct.

It is found in the secreted. Functionally, probable neurotoxin with unknown target. Possibly targets ion channels. The polypeptide is Conotoxin Cal14.2c (Californiconus californicus (California cone)).